The sequence spans 327 residues: Chain length determinant protein (327 aa).

Over 1-31 (MTVDSNTSSGRGNDPEQIDLIELLLQLWRGK) the chain is Cytoplasmic. Residues 32–52 (MTIIVAVIIAILLAVGYLMIA) traverse the membrane as a helical segment. Residues 53–294 (KEKWTSTAII…LPVRRDSPKT (242 aa)) are Periplasmic-facing. The chain crosses the membrane as a helical span at residues 295 to 315 (AITLVLAVLLGGMIGAGIVLG). The Cytoplasmic segment spans residues 316–327 (RNALRSYKPKAL).

Belongs to the WzzB/Cld/Rol family.

It is found in the cell inner membrane. Its pathway is bacterial outer membrane biogenesis; lipopolysaccharide biosynthesis. Its function is as follows. Confers a modal distribution of chain length on the O-antigen component of lipopolysaccharide (LPS). Gives rise to a reduced number of short chain molecules and increases in numbers of longer molecules, with a modal value of 20. This is Chain length determinant protein (wzzB) from Salmonella typhimurium (strain LT2 / SGSC1412 / ATCC 700720).